We begin with the raw amino-acid sequence, 425 residues long: Pleckstrin homology domain-containing family A member 2 (425 aa).

Residues 7–113 (QNRICGFLDI…WVEALNQASK (107 aa)) enclose the PH 1 domain. Lysine 141 is covalently cross-linked (Glycyl lysine isopeptide (Lys-Gly) (interchain with G-Cter in SUMO2)). The residue at position 184 (serine 184) is a Phosphoserine. Residues 198–298 (PLIKSGYCVK…WIEGIGAAVQ (101 aa)) enclose the PH 2 domain. The span at 310 to 331 (SRSISLTRPGSSTLTSAPNSIL) shows a compositional bias: polar residues. Positions 310-425 (SRSISLTRPG…DDENIRTSDV (116 aa)) are disordered. Residues serine 314 and serine 349 each carry the phosphoserine modification. 2 stretches are compositionally biased toward basic and acidic residues: residues 363 to 375 (AEEKPLSVEHAPE) and 400 to 410 (RSEPQHPKEKP).

In terms of assembly, binds MPDZ and PTPN13.

It localises to the cytoplasm. The protein localises to the cell membrane. The protein resides in the nucleus. Binds specifically to phosphatidylinositol 3,4-diphosphate (PtdIns3,4P2), but not to other phosphoinositides. May recruit other proteins to the plasma membrane. This is Pleckstrin homology domain-containing family A member 2 (Plekha2) from Mus musculus (Mouse).